Here is a 345-residue protein sequence, read N- to C-terminus: Dihydroorotase (345 aa).

Residues histidine 13 and histidine 15 each coordinate Zn(2+). Residues 15-17 and asparagine 41 each bind substrate; that span reads HLR. Zn(2+)-binding residues include lysine 99, histidine 136, and histidine 174. N6-carboxylysine is present on lysine 99. Histidine 136 is a substrate binding site. Residue leucine 219 coordinates substrate. Aspartate 247 serves as a coordination point for Zn(2+). The active site involves aspartate 247. Residues histidine 251 and alanine 263 each contribute to the substrate site.

It belongs to the metallo-dependent hydrolases superfamily. DHOase family. Class II DHOase subfamily. Homodimer. Zn(2+) serves as cofactor.

The catalysed reaction is (S)-dihydroorotate + H2O = N-carbamoyl-L-aspartate + H(+). Its pathway is pyrimidine metabolism; UMP biosynthesis via de novo pathway; (S)-dihydroorotate from bicarbonate: step 3/3. Catalyzes the reversible cyclization of carbamoyl aspartate to dihydroorotate. The sequence is that of Dihydroorotase from Hahella chejuensis (strain KCTC 2396).